The primary structure comprises 366 residues: Di-N-acetylchitobiase (366 aa).

Residues 1–22 (MALCGLPEFTLLLLPLLARLSA) form the signal peptide. Positions 23-366 (GDCPCSEAAL…EMWGALKPRL (344 aa)) constitute a GH18 domain. Residue E127 is the Proton donor of the active site. N-linked (GlcNAc...) asparagine glycans are attached at residues N131, N177, N212, N246, and N283.

Belongs to the glycosyl hydrolase 18 family.

It localises to the lysosome. In terms of biological role, involved in the degradation of asparagine-linked glycoproteins. Hydrolyze of N-acetyl-beta-D-glucosamine (1-4)N-acetylglucosamine chitobiose core from the reducing end of the bond, it requires prior cleavage by glycosylasparaginase. In Mus musculus (Mouse), this protein is Di-N-acetylchitobiase (Ctbs).